A 117-amino-acid chain; its full sequence is Immunoglobulin lambda variable 7-46 (117 aa).

A signal peptide spans 1 to 19 (MAWTPLFLFLLTCCPGSNS). A framework-1 region spans residues 20–44 (QAVVTQEPSLTVSPGGTVTLTCGSS). The Ig-like domain occupies 20-117 (QAVVTQEPSL…YCLLSYSGAR (98 aa)). Cys-41 and Cys-109 are disulfide-bonded. The interval 45–53 (TGAVTSGHY) is complementarity-determining-1. The interval 54 to 70 (PYWFQQKPGQAPRTLIY) is framework-2. Positions 71 to 73 (DTS) are complementarity-determining-2. The framework-3 stretch occupies residues 74–109 (NKHSWTPARFSGSLLGGKAALTLLGAQPEDEAEYYC). The tract at residues 110-117 (LLSYSGAR) is complementarity-determining-3.

In terms of assembly, immunoglobulins are composed of two identical heavy chains and two identical light chains; disulfide-linked.

Its subcellular location is the secreted. It localises to the cell membrane. Functionally, v region of the variable domain of immunoglobulin light chains that participates in the antigen recognition. Immunoglobulins, also known as antibodies, are membrane-bound or secreted glycoproteins produced by B lymphocytes. In the recognition phase of humoral immunity, the membrane-bound immunoglobulins serve as receptors which, upon binding of a specific antigen, trigger the clonal expansion and differentiation of B lymphocytes into immunoglobulins-secreting plasma cells. Secreted immunoglobulins mediate the effector phase of humoral immunity, which results in the elimination of bound antigens. The antigen binding site is formed by the variable domain of one heavy chain, together with that of its associated light chain. Thus, each immunoglobulin has two antigen binding sites with remarkable affinity for a particular antigen. The variable domains are assembled by a process called V-(D)-J rearrangement and can then be subjected to somatic hypermutations which, after exposure to antigen and selection, allow affinity maturation for a particular antigen. The protein is Immunoglobulin lambda variable 7-46 of Homo sapiens (Human).